Consider the following 674-residue polypeptide: Probable copper-transporting P-type ATPase B (674 aa).

A disordered region spans residues 1–22; sequence MNHSNQMHHDNHASHDHHSGHA. Basic and acidic residues predominate over residues 7–19; that stretch reads MHHDNHASHDHHS. Helical transmembrane passes span 32–52, 57–77, 95–115, 127–147, 284–304, and 315–335; these read FFVS…MGVN, FTFP…FFYG, GMMT…LYAF, TMDF…GHWI, GYLF…WMLI, and LVTV…PLVT. Catalysis depends on aspartate 367, which acts as the 4-aspartylphosphate intermediate. Mg(2+) contacts are provided by aspartate 565 and aspartate 569. Helical transmembrane passes span 623-645 and 649-671; these read LWWG…AFIG and SPAI…AFTL.

It belongs to the cation transport ATPase (P-type) (TC 3.A.3) family. Type IB subfamily.

The protein resides in the cell membrane. It catalyses the reaction Cu(+)(in) + ATP + H2O = Cu(+)(out) + ADP + phosphate + H(+). Functionally, involved in copper transport. The chain is Probable copper-transporting P-type ATPase B (copB) from Staphylococcus aureus (strain USA300 / TCH1516).